We begin with the raw amino-acid sequence, 142 residues long: Large ribosomal subunit protein uL13 (142 aa).

The protein belongs to the universal ribosomal protein uL13 family. As to quaternary structure, part of the 50S ribosomal subunit.

Functionally, this protein is one of the early assembly proteins of the 50S ribosomal subunit, although it is not seen to bind rRNA by itself. It is important during the early stages of 50S assembly. The polypeptide is Large ribosomal subunit protein uL13 (Pectobacterium atrosepticum (strain SCRI 1043 / ATCC BAA-672) (Erwinia carotovora subsp. atroseptica)).